Reading from the N-terminus, the 299-residue chain is Putative syntaxin-2 (299 aa).

Residues 1-270 are Cytoplasmic-facing; that stretch reads MRDRLNEFQS…SAMRKKICVA (270 aa). Residues 112–146 are a coiled coil; sequence EKRMRQNQLELLKDNLNKLINLFNETHQDYKSRVS. In terms of domain architecture, t-SNARE coiled-coil homology spans 193–255; that stretch reads YEDVKKRHGE…KQGSANVKTA (63 aa). A helical; Anchor for type IV membrane protein transmembrane segment spans residues 271 to 291; that stretch reads AILITILLILIIVAIILAVVL. Residues 292 to 299 lie on the Extracellular side of the membrane; sequence SRGNNNNK.

The protein belongs to the syntaxin family.

It is found in the membrane. Its function is as follows. Potentially involved in docking of synaptic vesicles at presynaptic active zones. The polypeptide is Putative syntaxin-2 (syx-2) (Caenorhabditis elegans).